The sequence spans 594 residues: Type I restriction enzyme EcoEI specificity subunit (594 aa).

This sequence belongs to the type-I restriction system S methylase family. The type I restriction/modification system is composed of three polypeptides R, M and S; the restriction enzyme has stoichiometry R(2)M(2)S(1) while the methyltransferase is M(2)S(1).

Functionally, the specificity (S) subunit of a type I restriction enzyme; this subunit dictates DNA sequence specificity. The M and S subunits together form a methyltransferase (MTase) that methylates two adenine residues of the sequence 5'-GAGN(7)ATGC-3'. In the presence of the R subunit the complex can also act as an endonuclease, binding to the same target sequence but cutting the DNA some distance from this site. Whether the DNA is cut or modified depends on the methylation state of the target sequence. When the target site is unmodified, the DNA is cut. When the target site is hemimethylated, the complex acts as a maintenance MTase modifying the DNA so that both strands become methylated. After locating a non-methylated recognition site, the enzyme complex serves as a molecular motor that translocates DNA in an ATP-dependent manner until a collision occurs that triggers cleavage. This chain is Type I restriction enzyme EcoEI specificity subunit, found in Escherichia coli.